A 310-amino-acid polypeptide reads, in one-letter code: MSSNNRKKLLLMGRSGSGKSSMRSIIFSNYSAFDTRRLGATIDVEHSHLRFLGNMTLNLWDCGGQDVFMENYFTKQKDHIFQMVQVLIHVFDVESTEVLKDIEIFAKALKQLRKYSPDAKIFVLLHKMDLVQLDKREELFQIMMKNLSETSSEFGFPNLIGFPTSIWDESLYKAWSQIVCSLIPNMSNHQSNLKKFKEIMNALEIILFERTTFLVICSSNGENSNENHDSSDNNNVLLDPKRFEKISNIMKNFKQSCTKLKSGFKTLILNNNIYVSELSSNMVCFIVLKDMNIPQELVLENIKKAKEFFQ.

Residues serine 15, glycine 18, lysine 19, serine 20, serine 21, threonine 35, threonine 41, glycine 64, histidine 126, aspartate 129, and isoleucine 166 each contribute to the GTP site.

Belongs to the GTR/RAG GTP-binding protein family. Heterodimer; with GTR2. Component of the GSE complex composed of GTR1, GTR2, SLM4, MEH1 and LTV1. Interacts with GTR2; the interaction is direct. Interacts with TOR1.

The protein resides in the vacuole membrane. It carries out the reaction GTP + H2O = GDP + phosphate + H(+). Functionally, GTPase involved in activation of the TORC1 signaling pathway, which promotes growth and represses autophagy in nutrient-rich conditions. Also required for TORC1 inactivation during nitrogen starvation. Required for intracellular sorting of GAP1 out of the endosome. Functionally associated with the inorganic phosphate transporter PHO84, and may be involved in regulating its function or localization. In Saccharomyces cerevisiae (strain ATCC 204508 / S288c) (Baker's yeast), this protein is GTP-binding protein GTR1 (GTR1).